Here is a 379-residue protein sequence, read N- to C-terminus: Guanine nucleotide-binding protein G(s) subunit alpha (379 aa).

In terms of domain architecture, G-alpha spans 38–379 (STHRLLLLGA…RMHLRQYELL (342 aa)). The G1 motif stretch occupies residues 41–54 (RLLLLGAGESGKST). Residues 46–53 (GAGESGKS), 182–188 (LRCRVLT), 207–211 (DVGGQ), 276–279 (NKQD), and alanine 351 each bind GTP. Mg(2+) contacts are provided by serine 53 and threonine 188. The G2 motif stretch occupies residues 180-188 (DILRCRVLT). Residues 203-212 (FHMFDVGGQR) are G3 motif. The tract at residues 272–279 (ILFLNKQD) is G4 motif. The interval 349 to 354 (TCAVDT) is G5 motif.

This sequence belongs to the G-alpha family. G(s) subfamily. G proteins are composed of 3 units; alpha, beta and gamma. The alpha chain contains the guanine nucleotide binding site.

Functionally, guanine nucleotide-binding proteins (G proteins) are involved as modulators or transducers in various transmembrane signaling systems. The G(s) protein is involved in hormonal regulation of adenylate cyclase: it activates the cyclase in response to beta-adrenergic stimuli. This Schistosoma mansoni (Blood fluke) protein is Guanine nucleotide-binding protein G(s) subunit alpha.